A 91-amino-acid polypeptide reads, in one-letter code: Putative regulatory protein Tlet_1629 (91 aa).

This sequence belongs to the RemA family.

This Pseudothermotoga lettingae (strain ATCC BAA-301 / DSM 14385 / NBRC 107922 / TMO) (Thermotoga lettingae) protein is Putative regulatory protein Tlet_1629.